Reading from the N-terminus, the 335-residue chain is Ferrochelatase (335 aa).

Fe cation is bound by residues His207 and Glu288.

The protein belongs to the ferrochelatase family.

It localises to the cytoplasm. It catalyses the reaction heme b + 2 H(+) = protoporphyrin IX + Fe(2+). It participates in porphyrin-containing compound metabolism; protoheme biosynthesis; protoheme from protoporphyrin-IX: step 1/1. Functionally, catalyzes the ferrous insertion into protoporphyrin IX. This is Ferrochelatase from Helicobacter pylori (strain HPAG1).